Reading from the N-terminus, the 103-residue chain is Pseudonajatoxin b homolog (103 aa).

An N-terminal signal peptide occupies residues 1–21 (MKTLLLTLVVVTIVCLDLGYT). 5 cysteine pairs are disulfide-bonded: C24–C42, C35–C63, C48–C52, C67–C79, and C80–C85.

Belongs to the three-finger toxin family. Long-chain subfamily. Type II alpha-neurotoxin sub-subfamily. Expressed by the venom gland.

It is found in the secreted. Its function is as follows. Binds with high affinity to muscular (alpha-1/CHRNA1) and neuronal (alpha-7/CHRNA7) nicotinic acetylcholine receptor (nAChR) and inhibits acetylcholine from binding to the receptor, thereby impairing neuromuscular and neuronal transmission. This chain is Pseudonajatoxin b homolog, found in Pseudonaja textilis (Eastern brown snake).